A 399-amino-acid chain; its full sequence is Aromatic-amino-acid aminotransferase (399 aa).

Substrate is bound by residues Gly36, Tyr67, Trp132, and Asn184. An N6-(pyridoxal phosphate)lysine modification is found at Lys247. A substrate-binding site is contributed by Arg375.

This sequence belongs to the class-I pyridoxal-phosphate-dependent aminotransferase family. Homodimer. Pyridoxal 5'-phosphate serves as cofactor.

The protein localises to the cytoplasm. It catalyses the reaction an aromatic L-alpha-amino acid + 2-oxoglutarate = an aromatic oxo-acid + L-glutamate. This Pseudomonas aeruginosa (strain ATCC 15692 / DSM 22644 / CIP 104116 / JCM 14847 / LMG 12228 / 1C / PRS 101 / PAO1) protein is Aromatic-amino-acid aminotransferase (phhC).